The following is a 198-amino-acid chain: Synaptobrevin homolog YKT6 (198 aa).

The Longin domain occupies 8-131 (VFYKGEPKAV…ALDGHLSRYQ (124 aa)). The v-SNARE coiled-coil homology domain maps to 138 to 198 (PMSKVQAELD…RKQNSCCAIM (61 aa)). Ser159 is subject to Phosphoserine. The S-palmitoyl cysteine moiety is linked to residue Cys194. Cys195 is subject to Cysteine methyl ester. Cys195 carries S-farnesyl cysteine lipidation. A propeptide spans 196-198 (AIM) (removed in mature form).

It belongs to the synaptobrevin family. In terms of assembly, identified in 2 different SNARE complexes; the first one composed of GOSR1, GOSR2 and STX5 and the second one composed of BET1L, GOSR1 and STX5. Palmitoylated; catalyzes its own palmitoylation. Palmitoylation is required for Golgi targeting. In terms of processing, farnesylation is required for Golgi targeting. Post-translationally, (Microbial infection) Targeted and hydrolyzed by C.botulinum neurotoxin type X (BoNT/X) which hydrolyzes the 173-Lys-|-Ser-174 bond and probably inhibits neurotransmitter release. It remains unknown whether BoNT/X is ever produced, or what organisms it targets. Highly expressed by neurons in brain and faintly detected in spleen, lung and kidney (at protein level). Ubiquitously expressed.

The protein localises to the cytoplasm. It localises to the cytosol. It is found in the cytoplasmic vesicle membrane. The protein resides in the golgi apparatus membrane. Functionally, vesicular soluble NSF attachment protein receptor (v-SNARE) mediating vesicle docking and fusion to a specific acceptor cellular compartment. Functions in endoplasmic reticulum to Golgi transport; as part of a SNARE complex composed of GOSR1, GOSR2 and STX5. Functions in early/recycling endosome to TGN transport; as part of a SNARE complex composed of BET1L, GOSR1 and STX5. Has a S-palmitoyl transferase activity. In Rattus norvegicus (Rat), this protein is Synaptobrevin homolog YKT6 (Ykt6).